Here is a 56-residue protein sequence, read N- to C-terminus: TauPI-stichotoxin-Hcr2c (56 aa).

Residues 4 to 54 form the BPTI/Kunitz inhibitor domain; the sequence is CLEPKVVGPCTAYFRRFYFDSETGKCTPFIYGGCEGNGNNFETLRACRAIC. 3 disulfide bridges follow: C4-C54, C13-C37, and C29-C50.

It belongs to the venom Kunitz-type family. Sea anemone type 2 potassium channel toxin subfamily.

The protein localises to the secreted. Its subcellular location is the nematocyst. In terms of biological role, this protease inhibitor shows two different activities, it inhibits both the capsaicin receptor TRPV1 and serine proteases. It partially (max 50%) and reversibly inhibits mammalian TRPV1, a non-selective cation channel expressed by sensory neurons of the pain pathway). The second activity is a weak inhibition of trypsin and chymotrypsin activity (Ki=0.9 uM and Ki=4.5 uM, respectively). In vivo, shows analgesic effects on mammals. The chain is TauPI-stichotoxin-Hcr2c from Radianthus crispa (Leathery sea anemone).